We begin with the raw amino-acid sequence, 1433 residues long: Probable serine/threonine-protein kinase DDB_G0277989 (1433 aa).

ATP contacts are provided by residues 1-4 and lysine 41; that span reads MNEI. Positions 1–272 constitute a Protein kinase 1 domain; sequence MNEIIVGEYK…EFDDFTHPLS (272 aa). Aspartate 151 functions as the Proton acceptor in the catalytic mechanism. 2 stretches are compositionally biased toward low complexity: residues 332 to 362 and 533 to 550; these read NNNNNNNNNNNNNNNNNNNNNNNNNNNNNNN and TATTTPTPTATTPTTTTA. 2 disordered regions span residues 332–366 and 521–550; these read NNNNNNNNNNNNNNNNNNNNNNNNNNNNNNNSDGP and PSSETTPRPPTPTATTTPTPTATTPTTTTA. In terms of domain architecture, Protein kinase 2 spans 1177–1433; it reads IYDKRYYIQK…QPHVCKSFKK (257 aa).

It belongs to the protein kinase superfamily. Ser/Thr protein kinase family.

The enzyme catalyses L-seryl-[protein] + ATP = O-phospho-L-seryl-[protein] + ADP + H(+). The catalysed reaction is L-threonyl-[protein] + ATP = O-phospho-L-threonyl-[protein] + ADP + H(+). In Dictyostelium discoideum (Social amoeba), this protein is Probable serine/threonine-protein kinase DDB_G0277989.